The primary structure comprises 321 residues: Anther-specific protein TA-29 (321 aa).

Positions 301–321 (RSDEEEAHHQSKQHKDEDIIN) are disordered.

As to expression, anther specific (tapetal cells).

The polypeptide is Anther-specific protein TA-29 (TA-29) (Nicotiana tabacum (Common tobacco)).